We begin with the raw amino-acid sequence, 102 residues long: Small ribosomal subunit protein eS24 (102 aa).

Belongs to the eukaryotic ribosomal protein eS24 family.

The chain is Small ribosomal subunit protein eS24 from Methanococcus maripaludis (strain C5 / ATCC BAA-1333).